Consider the following 98-residue polypeptide: Flagellar hook-basal body complex protein FliE (98 aa).

It belongs to the FliE family.

Its subcellular location is the bacterial flagellum basal body. This Listeria monocytogenes serovar 1/2a (strain ATCC BAA-679 / EGD-e) protein is Flagellar hook-basal body complex protein FliE.